Reading from the N-terminus, the 347-residue chain is Chlorophyll a/b light-harvesting protein PcbB (347 aa).

Helical transmembrane passes span 25 to 45, 64 to 84, 91 to 111, 206 to 226, 247 to 267, and 308 to 328; these read GLWLAAHVAQASFIVLWAGAI, LILIPHLAALGIGVGAGGVVV, AIGAVHLISSFVFAFGAIFHV, LASGHAFIGVVLLSGGVWHIT, LSSALAGLSMLGFAAAYFSAV, and LCNVHFYLAFFVLQGHLWHAI.

Belongs to the PsbB/PsbC family. IsiA/Pcb subfamily. As to quaternary structure, the antenna complex consists of chlorophylls (a and b) and chlorophyll a/b binding proteins. Chlorophyll a is required as a cofactor. The cofactor is chlorophyll b.

The protein resides in the cellular thylakoid membrane. In terms of biological role, the antenna complex functions as a light receptor, it captures and delivers excitation energy to photosystems II and I. The Prochlorales pcb genes are not related to higher plant LHCs. The chain is Chlorophyll a/b light-harvesting protein PcbB (pcbB) from Prochlorothrix hollandica.